We begin with the raw amino-acid sequence, 364 residues long: MKTNLLDFNLDQLTQHFAEMGEKPFRAKQVMRWMHQMAEDDFDAMTDLAKSLRAKLHERAEVRVPSLMTGQASSDGTRKWLLDVGTGNGVETVFIPEDDRGTLCVSSQVGCALECTFCSTGRQGFNRNLSTAEIIGQLWWANKAMGVTPKNERVVSNVVMMGMGEPLANFDNVVSAMQIMLDDHGYGLSRRRVTLSTSGLVPQMDRLREECPVALAVSLHAPNDAIRDVIVPINKKYPLSELMAACRRYLEKAPRDFITFEYVMLDGVNDRPEHARQLLELVRDVPCKFNLIPFNPFPNSGYDRSSNNAIRIFREILQEQGYVVTVRKTRGDDIDAACGQLAGQVQDKTRRQAKWTQIIEDRKS.

The active-site Proton acceptor is the E91. Residues 97 to 333 form the Radical SAM core domain; the sequence is EDDRGTLCVS…VTVRKTRGDD (237 aa). A disulfide bond links C104 and C338. [4Fe-4S] cluster is bound by residues C111, C115, and C118. Residues 164–165, S196, 218–220, and N295 contribute to the S-adenosyl-L-methionine site; these read GE and SLH. C338 serves as the catalytic S-methylcysteine intermediate.

The protein belongs to the radical SAM superfamily. RlmN family. [4Fe-4S] cluster serves as cofactor.

It is found in the cytoplasm. The catalysed reaction is adenosine(2503) in 23S rRNA + 2 reduced [2Fe-2S]-[ferredoxin] + 2 S-adenosyl-L-methionine = 2-methyladenosine(2503) in 23S rRNA + 5'-deoxyadenosine + L-methionine + 2 oxidized [2Fe-2S]-[ferredoxin] + S-adenosyl-L-homocysteine. The enzyme catalyses adenosine(37) in tRNA + 2 reduced [2Fe-2S]-[ferredoxin] + 2 S-adenosyl-L-methionine = 2-methyladenosine(37) in tRNA + 5'-deoxyadenosine + L-methionine + 2 oxidized [2Fe-2S]-[ferredoxin] + S-adenosyl-L-homocysteine. Specifically methylates position 2 of adenine 2503 in 23S rRNA and position 2 of adenine 37 in tRNAs. m2A2503 modification seems to play a crucial role in the proofreading step occurring at the peptidyl transferase center and thus would serve to optimize ribosomal fidelity. This Chromobacterium violaceum (strain ATCC 12472 / DSM 30191 / JCM 1249 / CCUG 213 / NBRC 12614 / NCIMB 9131 / NCTC 9757 / MK) protein is Dual-specificity RNA methyltransferase RlmN.